The following is a 390-amino-acid chain: 4-hydroxy-3-methylbut-2-en-1-yl diphosphate synthase (flavodoxin) (390 aa).

Positions 281, 284, 316, and 323 each coordinate [4Fe-4S] cluster.

Belongs to the IspG family. [4Fe-4S] cluster serves as cofactor.

It carries out the reaction (2E)-4-hydroxy-3-methylbut-2-enyl diphosphate + oxidized [flavodoxin] + H2O + 2 H(+) = 2-C-methyl-D-erythritol 2,4-cyclic diphosphate + reduced [flavodoxin]. Its pathway is isoprenoid biosynthesis; isopentenyl diphosphate biosynthesis via DXP pathway; isopentenyl diphosphate from 1-deoxy-D-xylulose 5-phosphate: step 5/6. Converts 2C-methyl-D-erythritol 2,4-cyclodiphosphate (ME-2,4cPP) into 1-hydroxy-2-methyl-2-(E)-butenyl 4-diphosphate. The polypeptide is 4-hydroxy-3-methylbut-2-en-1-yl diphosphate synthase (flavodoxin) (Salinispora tropica (strain ATCC BAA-916 / DSM 44818 / JCM 13857 / NBRC 105044 / CNB-440)).